We begin with the raw amino-acid sequence, 290 residues long: Small ribosomal subunit biogenesis GTPase RsgA (290 aa).

Residues 62–213 (KNSLVRPPIV…IADTPGFSSL (152 aa)) form the CP-type G domain. GTP-binding positions include 111–114 (SKLD) and 156–164 (GQTGVGKST). Zn(2+)-binding residues include cysteine 237, cysteine 242, histidine 244, and cysteine 250.

It belongs to the TRAFAC class YlqF/YawG GTPase family. RsgA subfamily. As to quaternary structure, monomer. Associates with 30S ribosomal subunit, binds 16S rRNA. The cofactor is Zn(2+).

Its subcellular location is the cytoplasm. Its function is as follows. One of several proteins that assist in the late maturation steps of the functional core of the 30S ribosomal subunit. Helps release RbfA from mature subunits. May play a role in the assembly of ribosomal proteins into the subunit. Circularly permuted GTPase that catalyzes slow GTP hydrolysis, GTPase activity is stimulated by the 30S ribosomal subunit. This chain is Small ribosomal subunit biogenesis GTPase RsgA, found in Streptococcus agalactiae serotype III (strain NEM316).